Here is a 156-residue protein sequence, read N- to C-terminus: Small ribosomal subunit protein uS7 (156 aa).

Belongs to the universal ribosomal protein uS7 family. Part of the 30S ribosomal subunit. Contacts proteins S9 and S11.

Its function is as follows. One of the primary rRNA binding proteins, it binds directly to 16S rRNA where it nucleates assembly of the head domain of the 30S subunit. Is located at the subunit interface close to the decoding center, probably blocks exit of the E-site tRNA. The sequence is that of Small ribosomal subunit protein uS7 from Nitrobacter hamburgensis (strain DSM 10229 / NCIMB 13809 / X14).